An 831-amino-acid chain; its full sequence is MKFTRREFMKAQAAASAAAVAGIALPATASNLIASQDLTKIKWEKAPCRFCGTGCSVLVGTQHGRVVATQGDPESPVNKGLNCVKGYFLSKIMYGKDRLTTPLLRMTEGVYDKNGQFEPVSWDAAFDIMADKFKDALKKKGPTAVGMFGSGQWTLWEGYAASKLMKAGFRTNNLDPNARHCMASAVGGFMRTFGIDEPMGCYDDLENADVFVLWGSNMAEMHPILWSRLADRRLSNPDVSVHVLSTYTHRSFELADNGMIFTPQSDLAILNFIANYIIQNDAVDKDFIEKHTNFRKGVTDIGYGLRPTDPLQKAAENPDSGASSPITFEEFAEYVSEFDVDYAVKMSGVPAEKLIELAKVYADPAKKVVSYWTMGFNQHTRGVWANNLMYNVHLLTGKISKPGSGPFSLTGQPSACGTAREVGTFSHRLPADLVVANPKHRAIAEKLWKLPEGTIEPKPGYHAVLQNRMLKDSKLNAYWVMCNNNVQAGANINEEIIPGYRNPENFIVVSDPYPTVTAQMGDLILPTAMWVEKEGAYGNAERRTQFWHQQVKAPEGAKSDLWQLVEFSKRFKIEEVWTEDLIAKMPEVRGETLFDVLYKNGQVDAFGLDEVADERLNDEARDFGFYIQKGLFEEYASFGRGHGHDLAPFDQYHEARGLRWPVVNGKETLWRFREGYDPYVEKGSEVQFYGHPDKKAVIFALPYEPPAESPDQEYDLWLSTGRVLEHWHSGSMTRRVPELYKAFPDAVVFMHPDDATARGVRRGDEIVLASRRGELTSRVETRGRNRPPRGLVFMPWFDAKQLVNKITLDATDPLSKQTDYKKCAVKITKKV.

A signal peptide (tat-type signal) is located at residues M1–A29. The 57-residue stretch at I41–D97 folds into the 4Fe-4S Mo/W bis-MGD-type domain. C48, C51, C55, and C83 together coordinate [4Fe-4S] cluster. Residues K85, Q152, N177, C181, W214–M221, S245–H249, Q264–D266, M374, Q378, N484, S510–D511, K533, D560, and T720–S729 contribute to the Mo-bis(molybdopterin guanine dinucleotide) site. W796 lines the substrate pocket. The Mo-bis(molybdopterin guanine dinucleotide) site is built by N804 and K821.

This sequence belongs to the prokaryotic molybdopterin-containing oxidoreductase family. NasA/NapA/NarB subfamily. In terms of assembly, component of the periplasmic nitrate reductase NapAB complex composed of NapA and NapB. It depends on [4Fe-4S] cluster as a cofactor. Mo-bis(molybdopterin guanine dinucleotide) serves as cofactor. In terms of processing, predicted to be exported by the Tat system. The position of the signal peptide cleavage has not been experimentally proven.

The protein localises to the periplasm. It carries out the reaction 2 Fe(II)-[cytochrome] + nitrate + 2 H(+) = 2 Fe(III)-[cytochrome] + nitrite + H2O. Functionally, catalytic subunit of the periplasmic nitrate reductase complex NapAB. Receives electrons from NapB and catalyzes the reduction of nitrate to nitrite. This is Periplasmic nitrate reductase from Psychromonas ingrahamii (strain DSM 17664 / CCUG 51855 / 37).